The sequence spans 1509 residues: DNA-directed RNA polymerase subunit beta' (1509 aa).

4 residues coordinate Zn(2+): cysteine 75, cysteine 77, cysteine 90, and cysteine 93. Mg(2+) is bound by residues aspartate 474, aspartate 476, and aspartate 478. The Zn(2+) site is built by cysteine 804, cysteine 878, cysteine 885, and cysteine 888.

It belongs to the RNA polymerase beta' chain family. In terms of assembly, the RNAP catalytic core consists of 2 alpha, 1 beta, 1 beta' and 1 omega subunit. When a sigma factor is associated with the core the holoenzyme is formed, which can initiate transcription. Mg(2+) is required as a cofactor. The cofactor is Zn(2+).

It carries out the reaction RNA(n) + a ribonucleoside 5'-triphosphate = RNA(n+1) + diphosphate. Its function is as follows. DNA-dependent RNA polymerase catalyzes the transcription of DNA into RNA using the four ribonucleoside triphosphates as substrates. The polypeptide is DNA-directed RNA polymerase subunit beta' (Sulfurovum sp. (strain NBC37-1)).